A 535-amino-acid polypeptide reads, in one-letter code: INSYN2B protein (535 aa).

Disordered stretches follow at residues Leu-23–Arg-85, Glu-215–Ser-346, and Lys-360–Glu-387. Over residues Lys-46–Pro-59 the composition is skewed to polar residues. The segment covering Ser-219–Ser-232 has biased composition (low complexity). Composition is skewed to polar residues over residues Cys-258–Pro-269, Arg-307–Gln-319, and Leu-361–Gly-375. Residues Asp-411–Glu-448 are a coiled coil. Residues Leu-493–Lys-528 are disordered.

The protein belongs to the INSYN2 family.

The sequence is that of INSYN2B protein (Insyn2b) from Mus musculus (Mouse).